Here is a 1338-residue protein sequence, read N- to C-terminus: Aldehyde oxidase (1338 aa).

The 2Fe-2S ferredoxin-type domain occupies 5-92 (SELLFYVNGR…GAAVTTVEGI (88 aa)). Cysteine 44, cysteine 49, cysteine 52, and cysteine 74 together coordinate [2Fe-2S] cluster. Glutamine 113 serves as a coordination point for Mo-molybdopterin. [2Fe-2S] cluster is bound by residues cysteine 114, cysteine 117, cysteine 149, and cysteine 151. Position 151 (cysteine 151) interacts with Mo-molybdopterin. One can recognise an FAD-binding PCMH-type domain in the interval 236–421 (FGSERMMWFS…VSVNIPYSRK (186 aa)). FAD is bound by residues 264 to 271 (VIMGNTSV), alanine 345, serine 354, histidine 358, aspartate 367, and leucine 411. Residues 806 to 807 (AF) and methionine 1047 each bind Mo-molybdopterin. Serine 1068 carries the phosphoserine modification. Mo-molybdopterin contacts are provided by residues 1088 to 1091 (GSVV), glutamine 1203, and leucine 1268. Glutamate 1270 functions as the Proton acceptor; for azaheterocycle hydroxylase activity in the catalytic mechanism.

The protein belongs to the xanthine dehydrogenase family. In terms of assembly, homodimer. Requires [2Fe-2S] cluster as cofactor. The cofactor is FAD. Mo-molybdopterin is required as a cofactor. Abundant in liver, expressed in adipose tissue and at lower levels in lung, skeletal muscle, pancreas. In contrast to mice, no significant gender difference in AOX1 expression level (at protein level).

The protein localises to the cytoplasm. It catalyses the reaction an aldehyde + O2 + H2O = a carboxylate + H2O2 + H(+). The enzyme catalyses retinal + O2 + H2O = retinoate + H2O2 + H(+). Its activity is regulated as follows. Is very potently inhibited by raloxifene. Also inhibited by estradiol, ethinyl estradiol, hydralazine, menadione, isovanillin and thioridazine. Not inhibited by allopurinol, a xanthine dehydrogenase potent inhibitor. In terms of biological role, oxidase with broad substrate specificity, oxidizing aromatic azaheterocycles, such as N1-methylnicotinamide, N-methylphthalazinium and phthalazine, as well as aldehydes, such as benzaldehyde, retinal, pyridoxal, and vanillin. Plays a key role in the metabolism of xenobiotics and drugs containing aromatic azaheterocyclic substituents. Participates in the bioactivation of prodrugs such as famciclovir, catalyzing the oxidation step from 6-deoxypenciclovir to penciclovir, which is a potent antiviral agent. Is probably involved in the regulation of reactive oxygen species homeostasis. May be a prominent source of superoxide generation via the one-electron reduction of molecular oxygen. May also catalyze nitric oxide (NO) production via the reduction of nitrite to NO with NADH or aldehyde as electron donor. May play a role in adipogenesis. In Homo sapiens (Human), this protein is Aldehyde oxidase.